A 528-amino-acid polypeptide reads, in one-letter code: Protein BFR2 (528 aa).

2 disordered regions span residues 14 to 158 and 372 to 401; these read NKSK…ADAK and DSNSAQDGGQEEDADVPANYDPRKKDNNAI. Residues 132–146 show a composition bias toward acidic residues; the sequence is DSGDSDSDSGSDAGE.

This sequence belongs to the AATF family.

It localises to the nucleus. Its subcellular location is the nucleolus. The protein is Protein BFR2 (BFR2) of Eremothecium gossypii (strain ATCC 10895 / CBS 109.51 / FGSC 9923 / NRRL Y-1056) (Yeast).